The chain runs to 274 residues: MSRPILVFDSGIGGLSVLAEIRKSLPHSDYCYLFDNARLPYGELEEQVLIAGCVALVCDLVARTNAMIVVVACNTASTVVLPALRANLSIPVVGVVPAIKPAAQMSKSKRIGLLATPGTVKRHYTHSLISQFADDCHVELFGCSELVMMAEQKIATGEMDMHRLADLLAPVVAAQLDVLVLGCTHFPMIQAELQQVLGAGVTLMDSGAAIAKRVVTLLTQQNFIVEQRRVTNEREAVGESAMQAFYTKAEISEGLTTTLIDCGFSTIERITTTN.

Substrate-binding positions include 9-10 (DS) and 41-42 (YG). Residue cysteine 73 is the Proton donor/acceptor of the active site. A substrate-binding site is contributed by 74–75 (NT). Cysteine 183 acts as the Proton donor/acceptor in catalysis. 184–185 (TH) contributes to the substrate binding site.

It belongs to the aspartate/glutamate racemases family.

The catalysed reaction is L-glutamate = D-glutamate. Its pathway is cell wall biogenesis; peptidoglycan biosynthesis. Functionally, provides the (R)-glutamate required for cell wall biosynthesis. The protein is Glutamate racemase of Shewanella baltica (strain OS223).